The chain runs to 155 residues: Immunoglobulin domain-containing protein oig-4 (155 aa).

The first 22 residues, 1-22 (MSFRLWGRCIFFFCFLLEAIDS), serve as a signal peptide directing secretion. N-linked (GlcNAc...) asparagine glycosylation is found at Asn-55 and Asn-114. Positions 73 to 154 (GYKLLIICKA…MAKNFKAEYT (82 aa)) constitute an Ig-like C2-type domain. Cysteines 80 and 136 form a disulfide.

Interacts with the non-alpha subunit of nicotinic acetylcholine receptor unc-29 and lev-10 to stabilize the complex formed between unc-29 and lev-10. As to expression, expressed in body wall muscle cells, the pharyngeal muscle cell pm6 and in four head neurons.

Its subcellular location is the synapse. The protein localises to the secreted. Its function is as follows. Required for the localization of acetylcholine receptors at neuromuscular junctions and for subsequently controlling the response evoked by receptor stimulation. This is Immunoglobulin domain-containing protein oig-4 from Caenorhabditis elegans.